The sequence spans 167 residues: Crossover junction endodeoxyribonuclease RuvC (167 aa).

Active-site residues include Asp14, Glu75, and Asp147. Residues Asp14, Glu75, and Asp147 each contribute to the Mg(2+) site.

It belongs to the RuvC family. As to quaternary structure, homodimer which binds Holliday junction (HJ) DNA. The HJ becomes 2-fold symmetrical on binding to RuvC with unstacked arms; it has a different conformation from HJ DNA in complex with RuvA. In the full resolvosome a probable DNA-RuvA(4)-RuvB(12)-RuvC(2) complex forms which resolves the HJ. The cofactor is Mg(2+).

It is found in the cytoplasm. The catalysed reaction is Endonucleolytic cleavage at a junction such as a reciprocal single-stranded crossover between two homologous DNA duplexes (Holliday junction).. Its function is as follows. The RuvA-RuvB-RuvC complex processes Holliday junction (HJ) DNA during genetic recombination and DNA repair. Endonuclease that resolves HJ intermediates. Cleaves cruciform DNA by making single-stranded nicks across the HJ at symmetrical positions within the homologous arms, yielding a 5'-phosphate and a 3'-hydroxyl group; requires a central core of homology in the junction. The consensus cleavage sequence is 5'-(A/T)TT(C/G)-3'. Cleavage occurs on the 3'-side of the TT dinucleotide at the point of strand exchange. HJ branch migration catalyzed by RuvA-RuvB allows RuvC to scan DNA until it finds its consensus sequence, where it cleaves and resolves the cruciform DNA. In Synechocystis sp. (strain ATCC 27184 / PCC 6803 / Kazusa), this protein is Crossover junction endodeoxyribonuclease RuvC.